The primary structure comprises 517 residues: DNA-binding protein (517 aa).

Polar residues predominate over residues 1–10 (MASRGGNQSS). The interval 1 to 110 (MASRGGNQSS…DISQDSEEER (110 aa)) is disordered. Residues 64-80 (VLVSETSRSSLSPERSN) show a composition bias toward low complexity. Positions 87–96 (PKKKPRKTKH) are enriched in basic residues. Y180 is modified (phosphotyrosine; by host). The Zn(2+) site is built by C269 and H271. A flexible loop region spans residues 282–316 (IEMDVASENGQRAMKENPDRAKITQNRWGRNVVQL). 6 residues coordinate Zn(2+): C324, C340, C382, C384, C436, and C453. Residues 501 to 517 (VSLPAGHYDSRQNPFDF) form a C-terminal arm, DBP binding region.

Belongs to the adenoviridae E2A DNA-binding protein family. As to quaternary structure, homomultimerizes on viral ssDNA bound to pTP. Forms a initiation complex with viral polymerase, pTP and hosts NFIA and POU2F1/OCT1. Interacts with host SRCAP.

The protein resides in the host nucleus. Functionally, plays a role in the elongation phase of viral strand displacement replication by unwinding the template in an ATP-independent fashion, employing its capacity to form multimers. Also enhances the rate of initiation. Released from template upon second strand synthesis. Assembles in complex with viral pTP, viral pol, host NFIA and host POU2F1/OCT1 on viral origin of replication. Covers the whole ssDNA genome during synthesis. The complementary strand synthesis induces its relese from DNA template. May inhibit cellular transcription mediated by the interaction between host SRCAP and CBP. The sequence is that of DNA-binding protein from Human adenovirus B serotype 7 (HAdV-7).